The following is a 681-amino-acid chain: Potassium-transporting ATPase ATP-binding subunit (681 aa).

4 consecutive transmembrane segments (helical) span residues 37–57 (MFVVEVGTFITLLATIFPTYF), 64–84 (VGYNALVTFILFVTVLFANFA), 218–238 (IALTTVLVSLTIIFIVVVMTL), and 255–275 (IALLVCLIPTTIGGLLSAIGI). Residue Asp-306 is the 4-aspartylphosphate intermediate of the active site. ATP-binding positions include Asp-343, Glu-347, 375–382 (FSAETRMS), and Lys-394. Mg(2+)-binding residues include Asp-517 and Asp-521. The next 3 helical transmembrane spans lie at 573–595 (ALTTFSIANDVAKYFAILPAIIS), 615–635 (AILSALIYNAIIIPILIPIAM), and 655–675 (IYGLGGLIAPFVGIKLIDMII).

This sequence belongs to the cation transport ATPase (P-type) (TC 3.A.3) family. Type IA subfamily. The system is composed of three essential subunits: KdpA, KdpB and KdpC.

It localises to the cell membrane. The catalysed reaction is K(+)(out) + ATP + H2O = K(+)(in) + ADP + phosphate + H(+). Functionally, part of the high-affinity ATP-driven potassium transport (or Kdp) system, which catalyzes the hydrolysis of ATP coupled with the electrogenic transport of potassium into the cytoplasm. This subunit is responsible for energy coupling to the transport system and for the release of the potassium ions to the cytoplasm. In Caldanaerobacter subterraneus subsp. tengcongensis (strain DSM 15242 / JCM 11007 / NBRC 100824 / MB4) (Thermoanaerobacter tengcongensis), this protein is Potassium-transporting ATPase ATP-binding subunit.